Here is a 400-residue protein sequence, read N- to C-terminus: NADH dehydrogenase-like protein MT1860 (400 aa).

It belongs to the NADH dehydrogenase family. Requires FAD as cofactor.

This chain is NADH dehydrogenase-like protein MT1860, found in Mycobacterium tuberculosis (strain CDC 1551 / Oshkosh).